Reading from the N-terminus, the 525-residue chain is Probable alpha-galactosidase A (525 aa).

Positions 1 to 17 are cleaved as a signal peptide; the sequence is MHPSMTLLAILPPLVRA. Cys40 and Cys72 are joined by a disulfide. 3 N-linked (GlcNAc...) asparagine glycosylation sites follow: Asn43, Asn81, and Asn117. Cys120 and Cys150 are disulfide-bonded. Asp148 serves as the catalytic Nucleophile. Residue Asn197 is glycosylated (N-linked (GlcNAc...) asparagine). The active-site Proton donor is the Asp206. Residues 402–525 form the Ricin B-type lectin domain; it reads PPDCPMVIPT…GLPSGVDIEA (124 aa). Intrachain disulfides connect Cys422–Cys434 and Cys459–Cys472.

This sequence belongs to the glycosyl hydrolase 27 family.

It localises to the secreted. It carries out the reaction Hydrolysis of terminal, non-reducing alpha-D-galactose residues in alpha-D-galactosides, including galactose oligosaccharides, galactomannans and galactolipids.. Functionally, hydrolyzes a variety of simple alpha-D-galactoside as well as more complex molecules such as oligosaccharides and polysaccharides. This is Probable alpha-galactosidase A (aglA) from Aspergillus clavatus (strain ATCC 1007 / CBS 513.65 / DSM 816 / NCTC 3887 / NRRL 1 / QM 1276 / 107).